We begin with the raw amino-acid sequence, 751 residues long: MELDAVGKAIVQYHLVPLVHQANLGLEVTMHRVDAHGHLATTAHPQAFGSAQQNHQLRPGFSASALKFTTPVRRDIPALMAYLKGLNTAARRSLDADERLWPLSSTPVLPDDLTNVPLADVDQVSYQRRRDLARKYELQRLMTTGSHVNMSLNEALFTRLYTETFHQQYHSYVDFRNAIYLKVAQGLVRMNWLIQYLFGASPRLAVTDTTSRPQRSSVQHPDGRYSQVTGDYTSIDRYVAKLTAAVRQQQLLSVNDFDGPVRLRSNGQLAMMARQGVYYLEYRGLDLDPTSPVGVDANAVAFVRLLASYFVMMPALPAKMVSQVNAQADQLTRQVLGENPTTASAQAVPAVQVLDALADFVKTYGLPNEDAVLLKQLKSWVTDPKKTLSAQIAMQADPLAWALERAARYQESSNERPFELAGFTALDLSSQQLAQQALTRGVQVDVVDPHANILRLTKLGRSQLVVNGSGTDLNPQALTTVLTHKAAAKQILAEHGVPVPASQTYHTANQLIADYDRYVQAGGIVLKAADESHKVIVFRIMPERGLFEQVVRQLFEQTSAVMAEEVVVASSYRFLVIDSRVQAIVERIPANIVGDGRSTVKTLLDRKNGRALRGTAFKWPQSALQLGTIERYRLDSYHLTLDSVVSRGTQILLREDATFGNGADVLDATADMHQSYVQAVEKLVADLHLAVAGVDVMIPNLYAELVPEHPEMAVYLGIHAAPYLYPHLFPMFGTAQPVAGQLLDALFKNED.

Residues 1-336 (MELDAVGKAI…QADQLTRQVL (336 aa)) form a glutamate--cysteine ligase region.

It in the N-terminal section; belongs to the glutamate--cysteine ligase type 1 family. Type 2 subfamily. As to quaternary structure, monomer.

It carries out the reaction L-cysteine + L-glutamate + ATP = gamma-L-glutamyl-L-cysteine + ADP + phosphate + H(+). It catalyses the reaction gamma-L-glutamyl-L-cysteine + glycine + ATP = glutathione + ADP + phosphate + H(+). It functions in the pathway sulfur metabolism; glutathione biosynthesis; glutathione from L-cysteine and L-glutamate: step 1/2. It participates in sulfur metabolism; glutathione biosynthesis; glutathione from L-cysteine and L-glutamate: step 2/2. Functionally, synthesizes glutathione from L-glutamate and L-cysteine via gamma-L-glutamyl-L-cysteine. The sequence is that of Glutathione biosynthesis bifunctional protein GshAB (gshAB) from Lactiplantibacillus plantarum (strain ATCC BAA-793 / NCIMB 8826 / WCFS1) (Lactobacillus plantarum).